Consider the following 224-residue polypeptide: Urease accessory protein UreF (224 aa).

Belongs to the UreF family. In terms of assembly, ureD, UreF and UreG form a complex that acts as a GTP-hydrolysis-dependent molecular chaperone, activating the urease apoprotein by helping to assemble the nickel containing metallocenter of UreC. The UreE protein probably delivers the nickel.

The protein localises to the cytoplasm. Functionally, required for maturation of urease via the functional incorporation of the urease nickel metallocenter. The polypeptide is Urease accessory protein UreF (Pseudomonas putida (strain ATCC 47054 / DSM 6125 / CFBP 8728 / NCIMB 11950 / KT2440)).